A 1286-amino-acid polypeptide reads, in one-letter code: Ankyrin-repeat and fibronectin type III domain-containing 1 (1286 aa).

ANK repeat units lie at residues 274-303 (QGNE…PEEL) and 311-340 (EGLT…RESP). The Fibronectin type-III domain maps to 411-507 (VPANACLMVS…TTTPVCASPS (97 aa)). The interval 748 to 755 (GLYLGYLK) is highly conserved peptide sequence. Residues 999-1011 (SSHIDCLPSTSPS) show a composition bias toward polar residues. Disordered stretches follow at residues 999–1032 (SSHI…EEGC), 1086–1106 (KASM…DTDH), 1187–1207 (AEDP…RGLP), and 1242–1286 (AGQD…SSML). Over residues 1260 to 1277 (SSLPSSTSSEMSPDPTSP) the composition is skewed to low complexity.

Expressed in both the suprachiasmatic nucleus and dorsal medial hypothalamus.

Its function is as follows. May play a role in neuronal function. The chain is Ankyrin-repeat and fibronectin type III domain-containing 1 from Mus musculus (Mouse).